Consider the following 587-residue polypeptide: Putative adhesin (587 aa).

A signal peptide spans 1–19 (MKFAISTLLIILQAAAVFA). C211 and C261 are oxidised to a cystine. A glycan (N-linked (GlcNAc...) asparagine) is linked at N239. 4 repeat units span residues 432–455 (IVTV…TYTK), 466–489 (IVTV…TYTK), 491–512 (PEIV…YHDV), and 513–531 (PEVV…TTTY). A 4 X 24 AA approximate tandem repeats, Thr-rich region spans residues 432 to 531 (IVTVITKEGG…EGGEKVTTTY (100 aa)). A lipid anchor (GPI-anchor amidated serine) is attached at S562. Residues 563-587 (EAQVNLGSKSAVGLLAIVPMLFLAI) constitute a propeptide, removed in mature form.

Post-translationally, the GPI-anchor is attached to the protein in the endoplasmic reticulum and serves to target the protein to the cell surface. There, the glucosamine-inositol phospholipid moiety is cleaved off and the GPI-modified mannoprotein is covalently attached via its lipidless GPI glycan remnant to the 1,6-beta-glucan of the outer cell wall layer.

The protein resides in the cell membrane. It is found in the secreted. Its subcellular location is the cell wall. Its function is as follows. Putative adhesion protein. May be involved in cell-cell interaction, interacting with other proteins by salt bridges and hydrogen bonds. The polypeptide is Putative adhesin (Komagataella phaffii (strain ATCC 76273 / CBS 7435 / CECT 11047 / NRRL Y-11430 / Wegner 21-1) (Yeast)).